Here is a 201-residue protein sequence, read N- to C-terminus: Peptide deformylase (201 aa).

Residues 1–34 (MSLNFAAMARQSERQASTVMVPKGEEQPESPKIH) are disordered. The segment covering 23 to 32 (KGEEQPESPK) has biased composition (basic and acidic residues). The Fe cation site is built by Cys-121 and His-163. Glu-164 is a catalytic residue. His-167 provides a ligand contact to Fe cation.

It belongs to the polypeptide deformylase family. Requires Fe(2+) as cofactor.

The enzyme catalyses N-terminal N-formyl-L-methionyl-[peptide] + H2O = N-terminal L-methionyl-[peptide] + formate. Its function is as follows. Removes the formyl group from the N-terminal Met of newly synthesized proteins. Requires at least a dipeptide for an efficient rate of reaction. N-terminal L-methionine is a prerequisite for activity but the enzyme has broad specificity at other positions. The chain is Peptide deformylase from Synechococcus sp. (strain RCC307).